We begin with the raw amino-acid sequence, 160 residues long: Small ribosomal subunit protein uS7B (160 aa).

This sequence belongs to the universal ribosomal protein uS7 family. As to quaternary structure, part of the 30S ribosomal subunit. Contacts proteins S9 and S11.

Its function is as follows. One of the primary rRNA binding proteins, it binds directly to 16S rRNA where it nucleates assembly of the head domain of the 30S subunit. Is located at the subunit interface close to the decoding center, probably blocks exit of the E-site tRNA. The protein is Small ribosomal subunit protein uS7B of Aquifex aeolicus (strain VF5).